A 229-amino-acid chain; its full sequence is MLSSGQSESLNQPMRMVICCLLLSTGLLAAVPSPAEQNALPATERQVEEVVTRLTGIMTTTQQAQSDAARPDVRMTTCSVQLEGDKSKAIYLYQEQTMSNNLGAPYRQRLLRIAASADGRAVESAGFKFVEAKPLAGLCAKPAAERLIAPMALDGDPTCTVRLVQAGDKYMGTTPEGGCQSNVRGAARITNEITLYKEGMDTRDRGFDAQGNQVWGAKEEPYRFRRLTP.

This sequence belongs to the CpcT/CpeT biliprotein lyase family.

Functionally, covalently attaches a chromophore to Cys residue(s) of phycobiliproteins. In Gloeobacter violaceus (strain ATCC 29082 / PCC 7421), this protein is Chromophore lyase CpcT/CpeT 1.